The primary structure comprises 326 residues: Vitamin B12 import system permease protein BtuC (326 aa).

9 consecutive transmembrane segments (helical) span residues 15–35 (WLLC…CAGE), 61–81 (LAVL…QALF), 88–108 (PGLL…VLLG), 112–132 (LPNW…TLIL), 146–166 (LLAG…AIYF), 184–204 (GGVD…LLWI), 240–260 (GWMV…GLVI), 274–294 (VLLP…DIVA), and 302–322 (ELPI…WLLL).

Belongs to the binding-protein-dependent transport system permease family. FecCD subfamily. As to quaternary structure, the complex is composed of two ATP-binding proteins (BtuD), two transmembrane proteins (BtuC) and a solute-binding protein (BtuF).

The protein localises to the cell inner membrane. Functionally, part of the ABC transporter complex BtuCDF involved in vitamin B12 import. Involved in the translocation of the substrate across the membrane. The sequence is that of Vitamin B12 import system permease protein BtuC from Escherichia coli O7:K1 (strain IAI39 / ExPEC).